The chain runs to 104 residues: Large ribosomal subunit protein uL24 (104 aa).

It belongs to the universal ribosomal protein uL24 family. As to quaternary structure, part of the 50S ribosomal subunit.

One of two assembly initiator proteins, it binds directly to the 5'-end of the 23S rRNA, where it nucleates assembly of the 50S subunit. Functionally, one of the proteins that surrounds the polypeptide exit tunnel on the outside of the subunit. The sequence is that of Large ribosomal subunit protein uL24 from Bradyrhizobium diazoefficiens (strain JCM 10833 / BCRC 13528 / IAM 13628 / NBRC 14792 / USDA 110).